Consider the following 209-residue polypeptide: Interleukin-6 (209 aa).

A signal peptide spans 1-26 (RFTSAFSPVAFSLGLLLVMATAFPTP). The disordered stretch occupies residues 28-47 (PVGGESQADATSNRPPLTSP). An intrachain disulfide couples Cys69 to Cys75. At Ser78 the chain carries Phosphoserine. An intrachain disulfide couples Cys98 to Cys108.

It belongs to the IL-6 superfamily. Component of a hexamer of two molecules each of IL6, IL6R and IL6ST; first binds to IL6R to associate with the signaling subunit IL6ST. Interacts with IL6R (via the N-terminal ectodomain); this interaction may be affected by IL6R-binding with SORL1, hence decreasing IL6 cis signaling. Interacts with SORL1 (via the N-terminal ectodomain); this interaction leads to IL6 internalization and lysosomal degradation. May form a trimeric complex with the soluble SORL1 ectodomain and soluble IL6R receptor; this interaction might stabilize circulating IL6, hence promoting IL6 trans signaling.

The protein localises to the secreted. Cytokine with a wide variety of biological functions in immunity, tissue regeneration, and metabolism. Binds to IL6R, then the complex associates to the signaling subunit IL6ST/gp130 to trigger the intracellular IL6-signaling pathway. The interaction with the membrane-bound IL6R and IL6ST stimulates 'classic signaling', whereas the binding of IL6 and soluble IL6R to IL6ST stimulates 'trans-signaling'. Alternatively, 'cluster signaling' occurs when membrane-bound IL6:IL6R complexes on transmitter cells activate IL6ST receptors on neighboring receiver cells. Functionally, IL6 is a potent inducer of the acute phase response. Rapid production of IL6 contributes to host defense during infection and tissue injury, but excessive IL6 synthesis is involved in disease pathology. In the innate immune response, is synthesized by myeloid cells, such as macrophages and dendritic cells, upon recognition of pathogens through toll-like receptors (TLRs) at the site of infection or tissue injury. In the adaptive immune response, is required for the differentiation of B cells into immunoglobulin-secreting cells. Plays a major role in the differentiation of CD4(+) T cell subsets. Essential factor for the development of T follicular helper (Tfh) cells that are required for the induction of germinal-center formation. Required to drive naive CD4(+) T cells to the Th17 lineage. Also required for proliferation of myeloma cells and the survival of plasmablast cells. In terms of biological role, acts as an essential factor in bone homeostasis and on vessels directly or indirectly by induction of VEGF, resulting in increased angiogenesis activity and vascular permeability. Induces, through 'trans-signaling' and synergistically with IL1B and TNF, the production of VEGF. Involved in metabolic controls, is discharged into the bloodstream after muscle contraction increasing lipolysis and improving insulin resistance. 'Trans-signaling' in central nervous system also regulates energy and glucose homeostasis. Mediates, through GLP-1, crosstalk between insulin-sensitive tissues, intestinal L cells and pancreatic islets to adapt to changes in insulin demand. Also acts as a myokine. Plays a protective role during liver injury, being required for maintenance of tissue regeneration. Also has a pivotal role in iron metabolism by regulating HAMP/hepcidin expression upon inflammation or bacterial infection. Through activation of IL6ST-YAP-NOTCH pathway, induces inflammation-induced epithelial regeneration. This chain is Interleukin-6 (IL6), found in Phoca vitulina (Harbor seal).